The sequence spans 165 residues: uncharacterized protein (165 aa).

In terms of domain architecture, N-acetyltransferase spans Leu8 to Pro159.

This is an uncharacterized protein from Shouchella clausii (strain KSM-K16) (Alkalihalobacillus clausii).